The chain runs to 807 residues: Sucrose synthase 2 (807 aa).

Residues 274–752 are GT-B glycosyltransferase; sequence MVFNVVILSP…GLKRIYERYT (479 aa).

This sequence belongs to the glycosyltransferase 1 family. Plant sucrose synthase subfamily. Detected in the whole plant but at lower levels. Predominantly expressed in developing siliques. Also detected in the root tip. Detected in the embryo, endosperm and seed coat (at the protein level).

It is found in the cytoplasm. It localises to the plastid membrane. The catalysed reaction is an NDP-alpha-D-glucose + D-fructose = a ribonucleoside 5'-diphosphate + sucrose + H(+). Functionally, sucrose-cleaving enzyme that provides UDP-glucose and fructose for various metabolic pathways. Modulates metabolic homeostasis and directs carbon towards starch synthesis in developing seeds. The polypeptide is Sucrose synthase 2 (SUS2) (Arabidopsis thaliana (Mouse-ear cress)).